We begin with the raw amino-acid sequence, 333 residues long: Cell division protein ZipA (333 aa).

The Periplasmic segment spans residues 1-5; the sequence is MQELR. The chain crosses the membrane as a helical span at residues 6–26; it reads LVLILVGALAIAALLFHGLWT. Residues 27–333 lie on the Cytoplasmic side of the membrane; the sequence is SRKETSSKFG…KQRVKVFCRK (307 aa). Over residues 72-81 the composition is skewed to basic and acidic residues; that stretch reads KEPAFAREEV. Positions 72–119 are disordered; that stretch reads KEPAFAREEVPTSDDPLFEGTVSSESNKFTQQEKPTVQQAQPQPQPQP. Polar residues predominate over residues 92–107; it reads TVSSESNKFTQQEKPT. The segment covering 108 to 119 has biased composition (low complexity); that stretch reads VQQAQPQPQPQP.

This sequence belongs to the ZipA family. In terms of assembly, interacts with FtsZ via their C-terminal domains.

It localises to the cell inner membrane. Its function is as follows. Essential cell division protein that stabilizes the FtsZ protofilaments by cross-linking them and that serves as a cytoplasmic membrane anchor for the Z ring. Also required for the recruitment to the septal ring of downstream cell division proteins. In Aliivibrio fischeri (strain ATCC 700601 / ES114) (Vibrio fischeri), this protein is Cell division protein ZipA.